A 336-amino-acid polypeptide reads, in one-letter code: NADH-quinone oxidoreductase subunit H (336 aa).

Helical transmembrane passes span Tyr-4–Ala-24, Tyr-75–Ile-95, Leu-108–Gly-128, Met-154–Ile-174, Ile-181–Ile-201, Leu-233–Phe-253, Phe-272–Trp-292, and Leu-308–Val-328.

Belongs to the complex I subunit 1 family. In terms of assembly, NDH-1 is composed of 14 different subunits. Subunits NuoA, H, J, K, L, M, N constitute the membrane sector of the complex.

The protein localises to the cell inner membrane. It catalyses the reaction a quinone + NADH + 5 H(+)(in) = a quinol + NAD(+) + 4 H(+)(out). Functionally, NDH-1 shuttles electrons from NADH, via FMN and iron-sulfur (Fe-S) centers, to quinones in the respiratory chain. The immediate electron acceptor for the enzyme in this species is believed to be ubiquinone. Couples the redox reaction to proton translocation (for every two electrons transferred, four hydrogen ions are translocated across the cytoplasmic membrane), and thus conserves the redox energy in a proton gradient. This subunit may bind ubiquinone. This is NADH-quinone oxidoreductase subunit H from Francisella tularensis subsp. mediasiatica (strain FSC147).